The chain runs to 485 residues: UDP-N-acetylmuramate--L-alanine ligase (485 aa).

Residue 125-131 (GTHGKTT) participates in ATP binding.

It belongs to the MurCDEF family.

It localises to the cytoplasm. The catalysed reaction is UDP-N-acetyl-alpha-D-muramate + L-alanine + ATP = UDP-N-acetyl-alpha-D-muramoyl-L-alanine + ADP + phosphate + H(+). It functions in the pathway cell wall biogenesis; peptidoglycan biosynthesis. Its function is as follows. Cell wall formation. The polypeptide is UDP-N-acetylmuramate--L-alanine ligase (Stutzerimonas stutzeri (strain A1501) (Pseudomonas stutzeri)).